The primary structure comprises 226 residues: Phosphoglycolate phosphatase (226 aa).

D9 (nucleophile) is an active-site residue. Mg(2+)-binding residues include D9 and D11. Residue K150 coordinates substrate. The Mg(2+) site is built by D173 and D177.

Belongs to the archaeal SPP-like hydrolase family. Mg(2+) serves as cofactor.

It carries out the reaction 2-phosphoglycolate + H2O = glycolate + phosphate. Catalyzes the dephosphorylation of 2-phosphoglycolate. This is Phosphoglycolate phosphatase from Methanococcoides burtonii (strain DSM 6242 / NBRC 107633 / OCM 468 / ACE-M).